The chain runs to 150 residues: Protein A151R (150 aa).

It belongs to the asfivirus A151R family. As to quaternary structure, monomer. Homodimer. Interacts with protein B119L. Interacts with membrane protein E248R. Requires Zn(2+) as cofactor.

In terms of biological role, may participate in a redox cascade for the formation of disulfide bonds in viral proteins. This is Protein A151R from African swine fever virus (isolate Tick/Malawi/Lil 20-1/1983) (ASFV).